The sequence spans 251 residues: Transmembrane ascorbate-dependent reductase CYB561 (251 aa).

M1 carries the N-acetylmethionine modification. Over 1–16 (MEGGAAASTPAALPYY) the chain is Cytoplasmic. The chain crosses the membrane as a helical span at residues 17-37 (VAFSQLLGLTLVAMTGAWLGL). Positions 19–220 (FSQLLGLTLV…FGGAVLYILT (202 aa)) constitute a Cytochrome b561 domain. The Vesicular portion of the chain corresponds to 38–51 (YRGGIAWESDLQFN). The chain crosses the membrane as a helical span at residues 52-72 (AHPLCMVIGLIFLQGDALLVY). Residues H53, R73, and K80 each coordinate heme b. At 73-85 (RVFRNEAKRTTKV) the chain is on the cytoplasmic side. L-ascorbate is bound by residues K80 and K84. Residues 86–106 (LHGLLHIFALVIALVGLVAVF) form a helical membrane-spanning segment. Heme b is bound by residues H87, 116–119 (DLYS), and H121. The Vesicular portion of the chain corresponds to 107-124 (DYHRKEGYADLYSLHSWC). The helical transmembrane segment at 125–145 (GILVFVLYFVQWLVGFSFFLF) threads the bilayer. The Cytoplasmic segment spans residues 146-158 (PGASFSLRSRYRP). Position 153 (R153) interacts with L-ascorbate. A helical transmembrane segment spans residues 159 to 179 (QHIFFGATIFLLSVGTALLGL). Heme b is bound by residues H160 and E181. At 180–198 (KEALLFKLRDKYSAFEPEG) the chain is on the vesicular side. The chain crosses the membrane as a helical span at residues 199-219 (VLANVLGLLLACFGGAVLYIL). The Cytoplasmic portion of the chain corresponds to 220-251 (TRADWKRPSQAEEQALSMDFKTLTEGDSPGSQ). Position 225 (K225) interacts with heme b. Position 247 is a phosphoserine (S247).

Heme b serves as cofactor.

It localises to the cytoplasmic vesicle. It is found in the secretory vesicle. Its subcellular location is the chromaffin granule membrane. The enzyme catalyses monodehydro-L-ascorbate radical(out) + L-ascorbate(in) = monodehydro-L-ascorbate radical(in) + L-ascorbate(out). Its function is as follows. Transmembrane reductase that uses ascorbate as an electron donor in the cytoplasm and transfers electrons across membranes to reduce monodehydro-L-ascorbate radical in the lumen of secretory vesicles. It is therefore involved the regeneration and homeostasis within secretory vesicles of ascorbate which in turn provides reducing equivalents needed to support the activity of intravesicular enzymes. The protein is Transmembrane ascorbate-dependent reductase CYB561 (CYB561) of Pongo abelii (Sumatran orangutan).